A 103-amino-acid polypeptide reads, in one-letter code: Cell division protein FtsB (103 aa).

At 1–3 the chain is on the cytoplasmic side; it reads MGK. The helical transmembrane segment at 4–21 threads the bilayer; the sequence is LTLLLLALLVWLQYSLWF. Topologically, residues 22-103 are periplasmic; sequence GKNGIHDYSR…RAATAGQTHR (82 aa). Positions 33-62 form a coiled coil; the sequence is NDDVVAQQATNAKLKARNDQLFAEIDDLNG.

The protein belongs to the FtsB family. As to quaternary structure, part of a complex composed of FtsB, FtsL and FtsQ.

It is found in the cell inner membrane. Functionally, essential cell division protein. May link together the upstream cell division proteins, which are predominantly cytoplasmic, with the downstream cell division proteins, which are predominantly periplasmic. The sequence is that of Cell division protein FtsB from Salmonella agona (strain SL483).